Here is a 1174-residue protein sequence, read N- to C-terminus: Creatine kinase, flagellar (1174 aa).

Positions 1–14 (MGCAASSQQTTATG) are enriched in polar residues. The disordered stretch occupies residues 1–62 (MGCAASSQQT…PFVEPDPNYP (62 aa)). The segment covering 18 to 39 (AAGEKANPAPANNNPNAANKAE) has biased composition (low complexity). The Phosphagen kinase N-terminal 1 domain occupies 53–139 (PFVEPDPNYP…FDPTIDKRHN (87 aa)). The 1; approximate repeat unit spans residues 61–414 (YPDLSKHNNY…EKALEKGSDI (354 aa)). In terms of domain architecture, Phosphagen kinase C-terminal 1 spans 166-408 (YVLSCRVRTG…KKLIELEKAL (243 aa)). Residues 169-173 (SCRVR), histidine 232, arginine 277, and 333-337 (RAGVH) each bind ATP. One can recognise a Phosphagen kinase N-terminal 2 domain in the interval 426-512 (RAEQVKEGYP…FDPVIDARHG (87 aa)). Residues 434-787 (YPDLSKHNNH…EKKLEKGEDI (354 aa)) form a 2; approximate repeat. In terms of domain architecture, Phosphagen kinase C-terminal 2 spans 539–781 (YVLSCRVRTG…ELLVQMEKKL (243 aa)). ATP is bound by residues 542 to 546 (SCRVR), histidine 605, arginine 706, 734 to 739 (RGTGGV), and aspartate 749. A Phosphagen kinase N-terminal 3 domain is found at 800–886 (PIKPFSYDYP…FDPVISARHG (87 aa)). The stretch at 808 to 1161 (YPDFSLHNNW…EKALMKGEDI (354 aa)) is one 3; approximate repeat. Residues 913–1155 (FVLSCRVRTG…KLLVNLEKAL (243 aa)) form the Phosphagen kinase C-terminal 3 domain.

It belongs to the ATP:guanido phosphotransferase family. In terms of assembly, monomer.

Its subcellular location is the cytoplasm. The protein localises to the cytoskeleton. It is found in the flagellum axoneme. The enzyme catalyses creatine + ATP = N-phosphocreatine + ADP + H(+). In terms of biological role, this axonemal protein participates in an energy shuttle that utilizes phosphocreatine to transfer the energy from ATP generated by the mitochondrion in the sperm head to dynein in the distal portions of the flagellum. This chain is Creatine kinase, flagellar, found in Strongylocentrotus purpuratus (Purple sea urchin).